The primary structure comprises 462 residues: NAD(P) transhydrogenase subunit beta (462 aa).

At 1–3 (MSG) the chain is on the periplasmic side. A helical transmembrane segment spans residues 4–24 (GLVTAAYIVAAILFIFSLAGL). Topologically, residues 25 to 45 (SKHETSRQGNNFGIAGMAIAL) are cytoplasmic. The helical transmembrane segment at 46-66 (IATIFGPDTGNVGWILLAMVI) threads the bilayer. Residues 67–82 (GGAIGIRLAKKVEMTE) are Periplasmic-facing. Residues 83 to 103 (MPELVAILHSFVGLAAVLVGF) traverse the membrane as a helical segment. The Cytoplasmic portion of the chain corresponds to 104-115 (NSYLHHDAGMAP). Residues 116 to 136 (ILVNIHLTEVFLGIFIGAVTF) form a helical membrane-spanning segment. At 137 to 164 (TGSVVAFGKLCGKISSKPLMLPNRHKMN) the chain is on the periplasmic side. Residues 165-185 (LAALVVSFLLLIVFVRTDSVG) traverse the membrane as a helical segment. The Cytoplasmic segment spans residues 186–188 (LQV). A helical transmembrane segment spans residues 189-209 (LALLIMTAIALVFGWHLVASI). Residues 210-215 (GGADMP) lie on the Periplasmic side of the membrane. Residues 216–236 (VVVSMLNSYSGWAAAAAGFML) form a helical membrane-spanning segment. At 237-239 (SND) the chain is on the cytoplasmic side. Residues 240–260 (LLIVTGALVGSSGAILSYIMC) form a helical membrane-spanning segment. Topologically, residues 261–308 (KAMNRSFISVIAGGFGTDGSSTGDDQEVGEHREITAEETAELLKNSHS) are periplasmic. Residues 309-329 (VIITPGYGMAVAQAQYPVAEI) form a helical membrane-spanning segment. The Cytoplasmic portion of the chain corresponds to 330 to 462 (TEKLRARGIN…ASVDAILKAL (133 aa)).

It belongs to the PNT beta subunit family. As to quaternary structure, heterodimer of an alpha and a beta chain.

Its subcellular location is the cell inner membrane. The catalysed reaction is NAD(+) + NADPH + H(+)(in) = NADH + NADP(+) + H(+)(out). In terms of biological role, the transhydrogenation between NADH and NADP is coupled to respiration and ATP hydrolysis and functions as a proton pump across the membrane. The protein is NAD(P) transhydrogenase subunit beta (pntB) of Escherichia coli O157:H7.